The primary structure comprises 444 residues: N-succinylarginine dihydrolase (444 aa).

Substrate contacts are provided by residues 19–28 (AGLSFGNVAS), N110, and 137–138 (HR). E174 is an active-site residue. R214 provides a ligand contact to substrate. The active site involves H250. Substrate contacts are provided by D252 and N362. Catalysis depends on C368, which acts as the Nucleophile.

It belongs to the succinylarginine dihydrolase family. In terms of assembly, homodimer.

It carries out the reaction N(2)-succinyl-L-arginine + 2 H2O + 2 H(+) = N(2)-succinyl-L-ornithine + 2 NH4(+) + CO2. The protein operates within amino-acid degradation; L-arginine degradation via AST pathway; L-glutamate and succinate from L-arginine: step 2/5. In terms of biological role, catalyzes the hydrolysis of N(2)-succinylarginine into N(2)-succinylornithine, ammonia and CO(2). This chain is N-succinylarginine dihydrolase, found in Shewanella putrefaciens (strain CN-32 / ATCC BAA-453).